Reading from the N-terminus, the 285-residue chain is NAD kinase (285 aa).

The Proton acceptor role is filled by aspartate 67. NAD(+) contacts are provided by residues 67 to 68, 141 to 142, arginine 152, lysine 169, aspartate 171, 182 to 187, and glutamine 242; these read DG, ND, and TGYSLS.

This sequence belongs to the NAD kinase family. Requires a divalent metal cation as cofactor.

The protein resides in the cytoplasm. It catalyses the reaction NAD(+) + ATP = ADP + NADP(+) + H(+). In terms of biological role, involved in the regulation of the intracellular balance of NAD and NADP, and is a key enzyme in the biosynthesis of NADP. Catalyzes specifically the phosphorylation on 2'-hydroxyl of the adenosine moiety of NAD to yield NADP. The sequence is that of NAD kinase from Trichlorobacter lovleyi (strain ATCC BAA-1151 / DSM 17278 / SZ) (Geobacter lovleyi).